A 189-amino-acid polypeptide reads, in one-letter code: Peptidyl-tRNA hydrolase (189 aa).

Y15 is a binding site for tRNA. H20 acts as the Proton acceptor in catalysis. Residues F66, N68, and N114 each contribute to the tRNA site.

Belongs to the PTH family. As to quaternary structure, monomer.

The protein localises to the cytoplasm. It catalyses the reaction an N-acyl-L-alpha-aminoacyl-tRNA + H2O = an N-acyl-L-amino acid + a tRNA + H(+). Its function is as follows. Hydrolyzes ribosome-free peptidyl-tRNAs (with 1 or more amino acids incorporated), which drop off the ribosome during protein synthesis, or as a result of ribosome stalling. Catalyzes the release of premature peptidyl moieties from peptidyl-tRNA molecules trapped in stalled 50S ribosomal subunits, and thus maintains levels of free tRNAs and 50S ribosomes. The sequence is that of Peptidyl-tRNA hydrolase from Streptococcus thermophilus (strain CNRZ 1066).